The chain runs to 312 residues: Methionyl-tRNA formyltransferase (312 aa).

A (6S)-5,6,7,8-tetrahydrofolate-binding site is contributed by 109–112 (SLLP).

Belongs to the Fmt family.

The catalysed reaction is L-methionyl-tRNA(fMet) + (6R)-10-formyltetrahydrofolate = N-formyl-L-methionyl-tRNA(fMet) + (6S)-5,6,7,8-tetrahydrofolate + H(+). In terms of biological role, attaches a formyl group to the free amino group of methionyl-tRNA(fMet). The formyl group appears to play a dual role in the initiator identity of N-formylmethionyl-tRNA by promoting its recognition by IF2 and preventing the misappropriation of this tRNA by the elongation apparatus. This is Methionyl-tRNA formyltransferase from Listeria innocua serovar 6a (strain ATCC BAA-680 / CLIP 11262).